Reading from the N-terminus, the 582-residue chain is ATP-dependent lipid A-core flippase (582 aa).

5 consecutive transmembrane segments (helical) span residues 25–45 (WFML…QAGA), 64–84 (VLIV…GQFM), 142–162 (AIIV…FLLW), 165–185 (WKLT…MNIT), and 253–273 (VIVQ…YIHL). An ABC transmembrane type-1 domain is found at 29-309 (VISVIGYALY…LTDVNVKVQR (281 aa)). In terms of domain architecture, ABC transporter spans 342–577 (IDFEGVSFGY…NGLYTQMYRM (236 aa)). Residue 375–382 (GRSGAGKS) participates in ATP binding.

Belongs to the ABC transporter superfamily. Lipid exporter (TC 3.A.1.106) family. Homodimer.

It is found in the cell inner membrane. It carries out the reaction ATP + H2O + lipid A-core oligosaccharideSide 1 = ADP + phosphate + lipid A-core oligosaccharideSide 2.. Functionally, involved in lipopolysaccharide (LPS) biosynthesis. Translocates lipid A-core from the inner to the outer leaflet of the inner membrane. Transmembrane domains (TMD) form a pore in the inner membrane and the ATP-binding domain (NBD) is responsible for energy generation. This Alcanivorax borkumensis (strain ATCC 700651 / DSM 11573 / NCIMB 13689 / SK2) protein is ATP-dependent lipid A-core flippase.